Here is a 469-residue protein sequence, read N- to C-terminus: Dihydrolipoyl dehydrogenase (469 aa).

FAD-binding positions include Glu-40–Cys-48, Lys-57, and Ala-120. The cysteines at positions 48 and 53 are disulfide-linked. NAD(+)-binding positions include Gly-186–Ile-190, Glu-209, and Ala-275–Val-278. FAD-binding residues include Asp-317 and Ala-325. The Proton acceptor role is filled by His-450.

It belongs to the class-I pyridine nucleotide-disulfide oxidoreductase family. Homodimer. The cofactor is FAD.

It is found in the cytoplasm. It catalyses the reaction N(6)-[(R)-dihydrolipoyl]-L-lysyl-[protein] + NAD(+) = N(6)-[(R)-lipoyl]-L-lysyl-[protein] + NADH + H(+). In terms of biological role, lipoamide dehydrogenase is a component of the alpha-ketoacid dehydrogenase complexes. The polypeptide is Dihydrolipoyl dehydrogenase (lpd) (Chlorobaculum tepidum (strain ATCC 49652 / DSM 12025 / NBRC 103806 / TLS) (Chlorobium tepidum)).